A 707-amino-acid polypeptide reads, in one-letter code: ATP-dependent zinc metalloprotease FtsH (707 aa).

Over 1–25 the chain is Cytoplasmic; sequence MSELDNKKDKSKDSNKKPKKPGAFS. A helical transmembrane segment spans residues 26 to 46; that stretch reads IGNIIIFVIVALLLIWVVFAF. Over 47 to 128 the chain is Extracellular; it reads LPNNPGTNKS…GTTFTGLELA (82 aa). A helical membrane pass occupies residues 129–149; that stretch reads TLAIANTSASGIGTLNFSGLV. Residues 150-707 are Cytoplasmic-facing; the sequence is TPTNQALAIL…IKTDESLDIK (558 aa). Residue 246–253 coordinates ATP; sequence GPPGTGKT. His-468 is a binding site for Zn(2+). Residue Glu-469 is part of the active site. Zn(2+) contacts are provided by His-472 and Asp-546.

This sequence in the central section; belongs to the AAA ATPase family. The protein in the C-terminal section; belongs to the peptidase M41 family. Homohexamer. Requires Zn(2+) as cofactor.

Its subcellular location is the cell membrane. In terms of biological role, acts as a processive, ATP-dependent zinc metallopeptidase for both cytoplasmic and membrane proteins. Plays a role in the quality control of integral membrane proteins. The protein is ATP-dependent zinc metalloprotease FtsH of Mycoplasma mobile (strain ATCC 43663 / 163K / NCTC 11711) (Mesomycoplasma mobile).